A 224-amino-acid chain; its full sequence is Redox-sensing transcriptional repressor Rex (224 aa).

Residues 17-56 (RYHRCLEELLKNDIKRISSKELSERMGVTASQIRQDLNNF) constitute a DNA-binding region (H-T-H motif). Residue 91–96 (GAGNLG) participates in NAD(+) binding.

This sequence belongs to the transcriptional regulatory Rex family. As to quaternary structure, homodimer.

It is found in the cytoplasm. In terms of biological role, modulates transcription in response to changes in cellular NADH/NAD(+) redox state. This chain is Redox-sensing transcriptional repressor Rex, found in Caldanaerobacter subterraneus subsp. tengcongensis (strain DSM 15242 / JCM 11007 / NBRC 100824 / MB4) (Thermoanaerobacter tengcongensis).